Consider the following 1925-residue polypeptide: Plexin-D1 (1925 aa).

Residues 1–21 (MARRAAGGAPPSARAAAAVPL) are compositionally biased toward low complexity. The interval 1–26 (MARRAAGGAPPSARAAAAVPLRPRPH) is disordered. An N-terminal signal peptide occupies residues 1 to 48 (MARRAAGGAPPSARAAAAVPLRPRPHSRGPGLLPLPLLLLLGAARAGA). Residues 49-548 (LEIQRRFPSP…TSHQMARVKV (500 aa)) enclose the Sema domain. At 49–1271 (LEIQRRFPSP…TLQLGGSETA (1223 aa)) the chain is on the extracellular side. 2 disulfide bridges follow: C106-C116 and C142-C150. N-linked (GlcNAc...) asparagine glycosylation is found at N157 and N226. Intrachain disulfides connect C324–C447 and C347–C391. N-linked (GlcNAc...) asparagine glycosylation occurs at N483. Intrachain disulfides connect C551–C568, C557–C602, C560–C577, C571–C583, and C639–C663. 3 consecutive IPT/TIG domains span residues 893–977 (PEIR…SREQ), 983–1065 (PTVH…NLTF), and 1071–1145 (PVIT…FING). N-linked (GlcNAc...) asparagine glycosylation occurs at N967. Residue N1120 is glycosylated (N-linked (GlcNAc...) asparagine). The chain crosses the membrane as a helical span at residues 1272–1292 (IVVSIVICSVLLLLSVVALFV). Residues 1293-1925 (FCTKSRRAER…NNIYECYSEA (633 aa)) are Cytoplasmic-facing.

The protein belongs to the plexin family. Interacts with NRP1 and SEMA4A. Interacts with SH3BP1; they dissociate upon SEMA3E binding to PLXND1 allowing SH3BP1 to transduce downstream signal through RAC1 inactivation. Detected in embryonic heart and vascular endothelium, brain, dorsal root ganglia, adrenal gland, lung mesenchyme, small intestine and in the ossification centers of vertebral bodies.

It is found in the cell membrane. Its subcellular location is the cell projection. The protein localises to the lamellipodium membrane. Functionally, cell surface receptor for SEMA4A and for class 3 semaphorins, such as SEMA3A, SEMA3C and SEMA3E. Plays an important role in cell-cell signaling, and in regulating the migration of a wide spectrum of cell types. Regulates the migration of thymocytes in the medulla. Regulates endothelial cell migration. Plays an important role in ensuring the specificity of synapse formation. Mediates anti-angiogenic signaling in response to SEMA3E. Required for normal development of the heart and vasculature. This is Plexin-D1 (Plxnd1) from Mus musculus (Mouse).